Reading from the N-terminus, the 414-residue chain is Patatin-like protein 1 (414 aa).

The PNPLA domain maps to 22 to 228; sequence LSLDGGGVRG…TANNPTLVAM (207 aa). The short motif at 26-31 is the GXGXXG element; the sequence is GGGVRG. A GXSXG motif is present at residues 64–68; sequence GTSTG. Ser66 (nucleophile) is an active-site residue. Asp215 serves as the catalytic Proton acceptor. Positions 215-217 match the DGA/G motif; the sequence is DGA. Ser399 is subject to Phosphoserine.

This sequence belongs to the patatin family. Phosphorylated at Ser-399 by CPK3. Phosphorylation enhances PLP1 activity towards phosphatidylcholine. As to expression, expressed specifically in roots and root hairs.

Its subcellular location is the cytoplasm. In terms of biological role, possesses non-specific lipolytic acyl hydrolase (LAH) activity. Catalyzes the hydrolysis of the neutral lipids monogalactosyldiacylglycerol (MGDG), digalactosyldiacylglycerol (DGDG) and phosphatidylglycerol (PG), and less efficiently the polar lipids phosphatidylcholine (PC) and phosphatidylinositol (PI), but not the storage lipid triacylglycerol (TAG). May play a role in root development. In Arabidopsis thaliana (Mouse-ear cress), this protein is Patatin-like protein 1 (PLP1).